The sequence spans 602 residues: Elongation factor 4 (602 aa).

One can recognise a tr-type G domain in the interval 7–189 (KFIRNFSIIA…QLVVAIPPPV (183 aa)). GTP-binding positions include 19–24 (DHGKST) and 136–139 (NKID).

Belongs to the TRAFAC class translation factor GTPase superfamily. Classic translation factor GTPase family. LepA subfamily.

It localises to the cell inner membrane. It carries out the reaction GTP + H2O = GDP + phosphate + H(+). In terms of biological role, required for accurate and efficient protein synthesis under certain stress conditions. May act as a fidelity factor of the translation reaction, by catalyzing a one-codon backward translocation of tRNAs on improperly translocated ribosomes. Back-translocation proceeds from a post-translocation (POST) complex to a pre-translocation (PRE) complex, thus giving elongation factor G a second chance to translocate the tRNAs correctly. Binds to ribosomes in a GTP-dependent manner. The chain is Elongation factor 4 from Coxiella burnetii (strain RSA 493 / Nine Mile phase I).